The chain runs to 407 residues: Probable tRNA sulfurtransferase (407 aa).

Residues 61-165 form the THUMP domain; sequence NEITYRLSKI…LDAIYMYEEV (105 aa). ATP contacts are provided by residues 183–184, 208–209, R265, G287, and Q296; these read ML and HF.

Belongs to the ThiI family.

The protein resides in the cytoplasm. The enzyme catalyses [ThiI sulfur-carrier protein]-S-sulfanyl-L-cysteine + a uridine in tRNA + 2 reduced [2Fe-2S]-[ferredoxin] + ATP + H(+) = [ThiI sulfur-carrier protein]-L-cysteine + a 4-thiouridine in tRNA + 2 oxidized [2Fe-2S]-[ferredoxin] + AMP + diphosphate. It carries out the reaction [ThiS sulfur-carrier protein]-C-terminal Gly-Gly-AMP + S-sulfanyl-L-cysteinyl-[cysteine desulfurase] + AH2 = [ThiS sulfur-carrier protein]-C-terminal-Gly-aminoethanethioate + L-cysteinyl-[cysteine desulfurase] + A + AMP + 2 H(+). Its pathway is cofactor biosynthesis; thiamine diphosphate biosynthesis. Functionally, catalyzes the ATP-dependent transfer of a sulfur to tRNA to produce 4-thiouridine in position 8 of tRNAs, which functions as a near-UV photosensor. Also catalyzes the transfer of sulfur to the sulfur carrier protein ThiS, forming ThiS-thiocarboxylate. This is a step in the synthesis of thiazole, in the thiamine biosynthesis pathway. The sulfur is donated as persulfide by IscS. In Staphylococcus aureus (strain MSSA476), this protein is Probable tRNA sulfurtransferase.